The sequence spans 226 residues: MKSATRSASSPFFIPEETGAVRPIGGMAKRSFDVLAASVALLLFSPLFLLIMALVKFSDGGSVFYGHRRIGHNGQSFKCLKFRTMMEKGDEVLEEFFRINPDAYEEWRATRKLQNDPRVTVVGAVLRKLSLDELPQLLNIIRGEMSVVGPRPVVEDELELYDSAAVFYLRSRPGLTGLWQISGRNDVSYATRVAFDTQYVQNWSLFADLVIVFKTIPAVCLSRGSY.

Residues 34-54 (VLAASVALLLFSPLFLLIMAL) form a helical membrane-spanning segment.

It belongs to the bacterial sugar transferase family.

It is found in the cell membrane. The protein operates within glycan metabolism; exopolysaccharide biosynthesis. Functionally, needed for the addition of the first sugar (galactose) to the isoprenoid carrier. May function as a sugar transferase. The chain is Exopolysaccharide production protein ExoY (exoY) from Rhizobium meliloti (strain 1021) (Ensifer meliloti).